Here is a 393-residue protein sequence, read N- to C-terminus: MQSYEGGVWLTCDIMGVSLFLVREHVVMWDLHRALCAGLLSVLLYGGCSSARDFVHVMKTAGNEVALVHYALQGDCIVFGFRGEVSDVVARVYRAEGVVSEEMSDELLQSFTDEIPSALSRIAVPAAYQESVDAARERLSFFAVRFLQKPHVGQQVVLRGSAQDVAHQKHDFVLPFEGINTQPARLEISEVRPLYGNKRSEFVELLVVESGNLLGITITNVGGKGNRCDYHFPAAQVRVGERVVLHWRKQDPASCDELSAETVSAGSQACARARDFWGQERSIPGRNPNAIVVKESANGKIQDALLFFNTHVKKGKAPTFRWAFPEIEAASRLALEQGAWLSTHEHFPLRESHFFQCDLTPAKSIALKRKRGAGRSAADCFVLKKATMGLPNQ.

This is an uncharacterized protein from Treponema pallidum (strain Nichols).